The chain runs to 23 residues: Cytochrome c3-1 (23 aa).

Residues 1 to 23 are disordered; it reads AAPKAPADGLKMDKTKQXVVFNH. His23 is a heme binding site.

Post-translationally, binds 4 heme groups per subunit.

It localises to the periplasm. Functionally, participates in sulfate respiration coupled with phosphorylation by transferring electrons from the enzyme dehydrogenase to ferredoxin. The polypeptide is Cytochrome c3-1 (Nitratidesulfovibrio vulgaris (Desulfovibrio vulgaris)).